Here is a 218-residue protein sequence, read N- to C-terminus: Cytochrome b6 (218 aa).

A helical membrane pass occupies residues 35 to 55 (IFYCLGGITLVCFLIQFATGF). Residue C38 participates in heme c binding. H89 and H103 together coordinate heme b. Transmembrane regions (helical) follow at residues 93–113 (ASMMVLMLILHVFRVYLTGGF), 119–139 (LTWVTGVVMAVITVAFGVTGY), and 189–209 (LHTFVLPWSLAVFMLMHFLMI). H190 and H205 together coordinate heme b.

Belongs to the cytochrome b family. PetB subfamily. As to quaternary structure, the 4 large subunits of the cytochrome b6-f complex are cytochrome b6, subunit IV (17 kDa polypeptide, PetD), cytochrome f and the Rieske protein, while the 4 small subunits are PetG, PetL, PetM and PetN. The complex functions as a dimer. Heme b serves as cofactor. The cofactor is heme c.

It localises to the cellular thylakoid membrane. Component of the cytochrome b6-f complex, which mediates electron transfer between photosystem II (PSII) and photosystem I (PSI), cyclic electron flow around PSI, and state transitions. This chain is Cytochrome b6, found in Prochlorococcus marinus (strain MIT 9301).